The chain runs to 253 residues: MSLALEQANPIQENFLREPPLPKHIAIIMDGNRRWQKKHEQFCKSNAISGHRRGADSIPQIVDTAALLGVEALTLFAFSTENFSRSKTEVAELFSLFNSQLHSKLSFLHDREIRLRCIGDLSKLPQELQNNIAKAVSATTHYSHMELIFAINYGSKNELVRAFKELHQDLTNKKISINEISEELISSYLDTSGLPDPDLLIRTGGEMRVSNFLLWQIAYTELYVTDVLWPDFTAHDLLEAIKTYQQRSRRGGK.

The active site involves Asp30. Asp30 provides a ligand contact to Mg(2+). Substrate is bound by residues 31-34 (GNRR), Trp35, His51, and 79-81 (STE). Catalysis depends on Asn82, which acts as the Proton acceptor. Substrate contacts are provided by residues Phe83, Arg85, Arg202, and 208–210 (RVS). Glu221 lines the Mg(2+) pocket.

This sequence belongs to the UPP synthase family. As to quaternary structure, homodimer. Requires Mg(2+) as cofactor.

Catalyzes the condensation of isopentenyl diphosphate (IPP) with allylic pyrophosphates generating different type of terpenoids. The chain is Isoprenyl transferase from Chlamydia muridarum (strain MoPn / Nigg).